An 826-amino-acid chain; its full sequence is 1,4-alpha-glucan-branching enzyme 1, chloroplastic/amyloplastic (826 aa).

The N-terminal 58 residues, 1-58 (ATTTTTTHNSKNKQYLAKQKPVELTLGYQNPNGCKVCSFGSKGSIYQKVSSGFKGVSV), are a transit peptide targeting the chloroplast. Residue D409 is the Nucleophile of the active site. E464 (proton donor) is an active-site residue. A disordered region spans residues 782–813 (DTDVARIPDVSMESEDSNLDRIEDNSEDAVDA).

Belongs to the glycosyl hydrolase 13 family. GlgB subfamily. In terms of assembly, monomer. As to expression, expressed in roots, leaves, stipules, pods and flowers.

It is found in the plastid. The protein localises to the chloroplast. Its subcellular location is the amyloplast. The catalysed reaction is Transfers a segment of a (1-&gt;4)-alpha-D-glucan chain to a primary hydroxy group in a similar glucan chain.. It participates in glycan biosynthesis; starch biosynthesis. Catalyzes the formation of the alpha-1,6-glucosidic linkages in starch by scission of a 1,4-alpha-linked oligosaccharide from growing alpha-1,4-glucan chains and the subsequent attachment of the oligosaccharide to the alpha-1,6 position. May preferentially transfer long chains during branching. The protein is 1,4-alpha-glucan-branching enzyme 1, chloroplastic/amyloplastic (SBEII) of Pisum sativum (Garden pea).